The sequence spans 393 residues: Probable acetyl-CoA acyltransferase (393 aa).

The active-site Acyl-thioester intermediate is C88. Residues H349 and C378 each act as proton acceptor in the active site.

The protein belongs to the thiolase-like superfamily. Thiolase family.

It localises to the cytoplasm. The catalysed reaction is 2 acetyl-CoA = acetoacetyl-CoA + CoA. In Staphylococcus aureus (strain Mu50 / ATCC 700699), this protein is Probable acetyl-CoA acyltransferase.